Consider the following 252-residue polypeptide: 5'-nucleotidase SurE (252 aa).

A divalent metal cation contacts are provided by D8, D9, S39, and N95.

It belongs to the SurE nucleotidase family. Requires a divalent metal cation as cofactor.

The protein localises to the cytoplasm. The catalysed reaction is a ribonucleoside 5'-phosphate + H2O = a ribonucleoside + phosphate. Functionally, nucleotidase that shows phosphatase activity on nucleoside 5'-monophosphates. This is 5'-nucleotidase SurE from Clostridium botulinum (strain 657 / Type Ba4).